The sequence spans 397 residues: Succinate--CoA ligase [ADP-forming] subunit beta (397 aa).

Positions 9–254 constitute an ATP-grasp domain; that stretch reads KELLRGYGAP…TSEEDEKEIE (246 aa). ATP-binding positions include Lys46, 53 to 55, Glu109, Ala112, and Glu117; that span reads GRG. Mg(2+) contacts are provided by Asn209 and Asp223. Residues Asn274 and 331-333 each bind substrate; that span reads GIM.

It belongs to the succinate/malate CoA ligase beta subunit family. In terms of assembly, heterotetramer of two alpha and two beta subunits. Requires Mg(2+) as cofactor.

The catalysed reaction is succinate + ATP + CoA = succinyl-CoA + ADP + phosphate. It catalyses the reaction GTP + succinate + CoA = succinyl-CoA + GDP + phosphate. The protein operates within carbohydrate metabolism; tricarboxylic acid cycle; succinate from succinyl-CoA (ligase route): step 1/1. Its function is as follows. Succinyl-CoA synthetase functions in the citric acid cycle (TCA), coupling the hydrolysis of succinyl-CoA to the synthesis of either ATP or GTP and thus represents the only step of substrate-level phosphorylation in the TCA. The beta subunit provides nucleotide specificity of the enzyme and binds the substrate succinate, while the binding sites for coenzyme A and phosphate are found in the alpha subunit. The protein is Succinate--CoA ligase [ADP-forming] subunit beta of Chelativorans sp. (strain BNC1).